The sequence spans 507 residues: Histidine ammonia-lyase (507 aa).

Residues 141–143 (ASG) constitute a cross-link (5-imidazolinone (Ala-Gly)). 2,3-didehydroalanine (Ser) is present on S142.

The protein belongs to the PAL/histidase family. Contains an active site 4-methylidene-imidazol-5-one (MIO), which is formed autocatalytically by cyclization and dehydration of residues Ala-Ser-Gly.

The protein resides in the cytoplasm. It carries out the reaction L-histidine = trans-urocanate + NH4(+). It functions in the pathway amino-acid degradation; L-histidine degradation into L-glutamate; N-formimidoyl-L-glutamate from L-histidine: step 1/3. In Burkholderia ambifaria (strain ATCC BAA-244 / DSM 16087 / CCUG 44356 / LMG 19182 / AMMD) (Burkholderia cepacia (strain AMMD)), this protein is Histidine ammonia-lyase.